The primary structure comprises 366 residues: Peptide chain release factor 1 (366 aa).

N5-methylglutamine is present on Gln-239.

Belongs to the prokaryotic/mitochondrial release factor family. Methylated by PrmC. Methylation increases the termination efficiency of RF1.

It localises to the cytoplasm. In terms of biological role, peptide chain release factor 1 directs the termination of translation in response to the peptide chain termination codons UAG and UAA. The polypeptide is Peptide chain release factor 1 (Albidiferax ferrireducens (strain ATCC BAA-621 / DSM 15236 / T118) (Rhodoferax ferrireducens)).